Consider the following 94-residue polypeptide: MAVFRVLLASLLISLLVLDFVHADMVTSNDAPKIDCNSRCQERCSLSSRPNLCHRACGTCCARCNCVAPGTSGNYDKCPCYGSLTTHGGRRKCP.

A signal peptide spans 1–23 (MAVFRVLLASLLISLLVLDFVHA).

The protein belongs to the GASA family. Six disulfide bonds may be present.

The protein resides in the secreted. Its function is as follows. Gibberellin-regulated protein that may function in hormonal controlled steps of development such as seed germination, flowering and seed maturation. The sequence is that of Gibberellin-regulated protein 11 (GASA11) from Arabidopsis thaliana (Mouse-ear cress).